A 183-amino-acid chain; its full sequence is Ribosome-recycling factor (183 aa).

Belongs to the RRF family.

It is found in the cytoplasm. Functionally, responsible for the release of ribosomes from messenger RNA at the termination of protein biosynthesis. May increase the efficiency of translation by recycling ribosomes from one round of translation to another. This is Ribosome-recycling factor from Ureaplasma parvum serovar 3 (strain ATCC 27815 / 27 / NCTC 11736).